The following is a 409-amino-acid chain: LL-diaminopimelate aminotransferase (409 aa).

The substrate site is built by Tyr-15 and Gly-42. Residues Tyr-72, 108 to 109 (SK), Tyr-132, Asn-187, Tyr-218, and 246 to 248 (SFS) contribute to the pyridoxal 5'-phosphate site. Residues Lys-109, Tyr-132, and Asn-187 each coordinate substrate. The residue at position 249 (Lys-249) is an N6-(pyridoxal phosphate)lysine. Residues Arg-257 and Asn-292 each contribute to the pyridoxal 5'-phosphate site. Residues Asn-292 and Arg-388 each contribute to the substrate site.

This sequence belongs to the class-I pyridoxal-phosphate-dependent aminotransferase family. LL-diaminopimelate aminotransferase subfamily. As to quaternary structure, homodimer. It depends on pyridoxal 5'-phosphate as a cofactor.

The catalysed reaction is (2S,6S)-2,6-diaminopimelate + 2-oxoglutarate = (S)-2,3,4,5-tetrahydrodipicolinate + L-glutamate + H2O + H(+). It functions in the pathway amino-acid biosynthesis; L-lysine biosynthesis via DAP pathway; LL-2,6-diaminopimelate from (S)-tetrahydrodipicolinate (aminotransferase route): step 1/1. Involved in the synthesis of meso-diaminopimelate (m-DAP or DL-DAP), required for both lysine and peptidoglycan biosynthesis. Catalyzes the direct conversion of tetrahydrodipicolinate to LL-diaminopimelate. The protein is LL-diaminopimelate aminotransferase of Heliobacterium modesticaldum (strain ATCC 51547 / Ice1).